Consider the following 157-residue polypeptide: uncharacterized protein (157 aa).

The segment at 1–157 (MNRGPPLRSR…SFSFLVPSNS (157 aa)) is disordered. Positions 8-31 (RSRPPSSPPPASAFPGPSPFPSPS) are enriched in pro residues. Positions 62 to 71 (RTSHPPRCPH) are enriched in basic residues. Residues 76–95 (PSAPSPPFTPPHPLPTPTPS) are compositionally biased toward pro residues. Low complexity-rich tracts occupy residues 96 to 117 (SSPR…SLAS) and 124 to 157 (SFSS…PSNS).

This is an uncharacterized protein from Vitis vinifera (Grape).